The sequence spans 459 residues: MTFDYDLFVIGAGSGGLAASKRAASYGAKVAIAENDLVGGTCVIRGCVPKKLMVYGSHFPALFEDAAGYGWQVGKAELNWEHFITSIDKEVRRLSQLHISFLEKAGVELISGRATLVDNHTVEVGERKFTADKILIAVGGRPIKPELPGMEYGITSNEIFHLKTQPKHIAIIGSGYIGTEFAGIMRGLGSQVTQITRGDKILKGFDEDIRTEIQEGMTNHGIRIIPKNVVTAIEQVPEGLKISLSGEDQEPIIADVFLVATGRVPNVDGLGLENAGVDVVDSSIEGPGYSTMNAIAVNEYSQTSQPNIYAVGDVTDRLNLTPVAIGEGRAFADSEFGNNRREFSHETIATAVFSNPQASTVGLTEAEARAKLGDDAVTIYRTRFRPMYHSFTGKQERIMMKLVVDTKTDKVLGAHMVGENAAEIIQGVAIAVKMGATKKDFDATVGIHPSSAEEFVTMR.

Residues S14, G15, E34, T41, C42, K50, and A114 each contribute to the FAD site. S14 is a glutathione binding site. Residues C42 and C47 are joined by a disulfide bond. Residues I177, E180, R197, K203, and G262 each coordinate NADP(+). FAD-binding residues include D313 and T321. A glutathione-binding site is contributed by R329. NADP(+) is bound at residue A351. Residue H448 coordinates FAD. Residue H448 is the Proton acceptor of the active site.

Belongs to the class-I pyridine nucleotide-disulfide oxidoreductase family. Homodimer. FAD is required as a cofactor.

It localises to the cytoplasm. It carries out the reaction 2 glutathione + NADP(+) = glutathione disulfide + NADPH + H(+). In terms of biological role, catalyzes the reduction of glutathione disulfide (GSSG) to reduced glutathione (GSH). Constitutes the major mechanism to maintain a high GSH:GSSG ratio in the cytosol. This chain is Glutathione reductase (gor), found in Nostoc sp. (strain PCC 7120 / SAG 25.82 / UTEX 2576).